We begin with the raw amino-acid sequence, 118 residues long: Large ribosomal subunit protein bL20 (118 aa).

This sequence belongs to the bacterial ribosomal protein bL20 family.

In terms of biological role, binds directly to 23S ribosomal RNA and is necessary for the in vitro assembly process of the 50S ribosomal subunit. It is not involved in the protein synthesizing functions of that subunit. The polypeptide is Large ribosomal subunit protein bL20 (Klebsiella pneumoniae (strain 342)).